The following is a 311-amino-acid chain: Cytosolic Fe-S cluster assembly factor Nubp1 homolog (311 aa).

The tract at residues 1-20 (MQAPPPEHCPGVESENAGKG) is disordered. Residues cysteine 9, cysteine 23, cysteine 26, and cysteine 32 each contribute to the [4Fe-4S] cluster site. 63–70 (GKGGVGKS) serves as a coordination point for ATP. [4Fe-4S] cluster-binding residues include cysteine 240 and cysteine 243.

Belongs to the Mrp/NBP35 ATP-binding proteins family. NUBP1/NBP35 subfamily. As to quaternary structure, heterotetramer of 2 Nubp1 and 2 Nubp2 chains. [4Fe-4S] cluster serves as cofactor.

Its subcellular location is the cytoplasm. Component of the cytosolic iron-sulfur (Fe/S) protein assembly (CIA) machinery. Required for maturation of extramitochondrial Fe-S proteins. The Nubp1-Nubp2 heterotetramer forms a Fe-S scaffold complex, mediating the de novo assembly of an Fe-S cluster and its transfer to target apoproteins. In Drosophila simulans (Fruit fly), this protein is Cytosolic Fe-S cluster assembly factor Nubp1 homolog.